We begin with the raw amino-acid sequence, 234 residues long: Sugar fermentation stimulation protein A (234 aa).

A DNA-binding region (H-T-H motif) is located at residues 201-220 (LLSEAQQRGVEILAYKAEIS).

This sequence belongs to the SfsA family.

In terms of biological role, binds to DNA non-specifically. Could be a regulatory factor involved in maltose metabolism. In Shigella boydii serotype 4 (strain Sb227), this protein is Sugar fermentation stimulation protein A.